We begin with the raw amino-acid sequence, 617 residues long: Probable translation initiation factor IF-2 (617 aa).

The region spanning 14 to 231 (LRQPIVVVLG…VLAGLTQTYL (218 aa)) is the tr-type G domain. Residues 23 to 30 (GHVDHGKT) form a G1 region. Residue 23–30 (GHVDHGKT) coordinates GTP. The tract at residues 48-52 (GITQH) is G2. The interval 87 to 90 (DTPG) is G3. Residues 87-91 (DTPGH) and 141-144 (NKID) contribute to the GTP site. Positions 141 to 144 (NKID) are G4. The G5 stretch occupies residues 209-211 (SAR).

Belongs to the TRAFAC class translation factor GTPase superfamily. Classic translation factor GTPase family. IF-2 subfamily.

Functionally, function in general translation initiation by promoting the binding of the formylmethionine-tRNA to ribosomes. Seems to function along with eIF-2. This Aeropyrum pernix (strain ATCC 700893 / DSM 11879 / JCM 9820 / NBRC 100138 / K1) protein is Probable translation initiation factor IF-2 (infB).